A 33-amino-acid chain; its full sequence is Photosystem II reaction center protein Psb30 (33 aa).

Residues 5–25 (LALTLVSLVLVVSAGPLVVVL) form a helical membrane-spanning segment.

Belongs to the Psb30/Ycf12 family. As to quaternary structure, PSII is composed of 1 copy each of membrane proteins PsbA, PsbB, PsbC, PsbD, PsbE, PsbF, PsbH, PsbI, PsbJ, PsbK, PsbL, PsbM, PsbT, PsbX, PsbY, PsbZ, Psb30/Ycf12, peripheral proteins of the oxygen-evolving complex and a large number of cofactors. It forms dimeric complexes.

It is found in the plastid. The protein resides in the chloroplast thylakoid membrane. Functionally, a core subunit of photosystem II (PSII), required for optimal photosynthesis, probably helps stabilize the reaction center. The protein is Photosystem II reaction center protein Psb30 of Chlamydomonas reinhardtii (Chlamydomonas smithii).